The chain runs to 127 residues: Putative pre-16S rRNA nuclease (127 aa).

This sequence belongs to the YqgF nuclease family.

Its subcellular location is the cytoplasm. In terms of biological role, could be a nuclease involved in processing of the 5'-end of pre-16S rRNA. The protein is Putative pre-16S rRNA nuclease of Campylobacter jejuni subsp. jejuni serotype O:23/36 (strain 81-176).